A 310-amino-acid chain; its full sequence is Aspartate carbamoyltransferase catalytic subunit (310 aa).

Positions 55 and 56 each coordinate carbamoyl phosphate. Residue Lys-85 coordinates L-aspartate. Carbamoyl phosphate contacts are provided by Arg-106, His-135, and Gln-138. Arg-168 and Arg-230 together coordinate L-aspartate. Residues Leu-268 and Pro-269 each contribute to the carbamoyl phosphate site.

This sequence belongs to the aspartate/ornithine carbamoyltransferase superfamily. ATCase family. Heterododecamer (2C3:3R2) of six catalytic PyrB chains organized as two trimers (C3), and six regulatory PyrI chains organized as three dimers (R2).

The enzyme catalyses carbamoyl phosphate + L-aspartate = N-carbamoyl-L-aspartate + phosphate + H(+). The protein operates within pyrimidine metabolism; UMP biosynthesis via de novo pathway; (S)-dihydroorotate from bicarbonate: step 2/3. Catalyzes the condensation of carbamoyl phosphate and aspartate to form carbamoyl aspartate and inorganic phosphate, the committed step in the de novo pyrimidine nucleotide biosynthesis pathway. In Buchnera aphidicola subsp. Acyrthosiphon pisum (strain APS) (Acyrthosiphon pisum symbiotic bacterium), this protein is Aspartate carbamoyltransferase catalytic subunit.